The sequence spans 124 residues: Ribonuclease pancreatic (124 aa).

Residues 1–23 are disordered; the sequence is RESPAMKFQRQHMDSGNSPGNNP. 2 residues coordinate substrate: Lys-7 and Arg-10. The Proton acceptor role is filled by His-12. Residues 14–23 are compositionally biased toward polar residues; sequence DSGNSPGNNP. Disulfide bonds link Cys-26–Cys-84, Cys-40–Cys-95, Cys-58–Cys-110, and Cys-65–Cys-72. Substrate contacts are provided by residues 41 to 45 and Lys-66; that span reads KPVNT. Asn-76 carries N-linked (GlcNAc...) asparagine; partial glycosylation. Arg-85 is a substrate binding site. His-119 (proton donor) is an active-site residue.

Belongs to the pancreatic ribonuclease family. Monomer. Interacts with and forms tight 1:1 complexes with RNH1. Dimerization of two such complexes may occur. Interaction with RNH1 inhibits this protein. As to expression, pancreas.

Its subcellular location is the secreted. It catalyses the reaction an [RNA] containing cytidine + H2O = an [RNA]-3'-cytidine-3'-phosphate + a 5'-hydroxy-ribonucleotide-3'-[RNA].. It carries out the reaction an [RNA] containing uridine + H2O = an [RNA]-3'-uridine-3'-phosphate + a 5'-hydroxy-ribonucleotide-3'-[RNA].. Its function is as follows. Endonuclease that catalyzes the cleavage of RNA on the 3' side of pyrimidine nucleotides. Acts on single-stranded and double-stranded RNA. In Balaenoptera acutorostrata (Common minke whale), this protein is Ribonuclease pancreatic (RNASE1).